We begin with the raw amino-acid sequence, 376 residues long: Protein STRICTOSIDINE SYNTHASE-LIKE 2 (376 aa).

The N-terminal stretch at 1 to 23 (MMKLLLVVATSVALIFSVTDLSG) is a signal peptide. Asn-79 and Asn-244 each carry an N-linked (GlcNAc...) asparagine glycan.

The protein belongs to the strictosidine synthase family.

It localises to the vacuole. This chain is Protein STRICTOSIDINE SYNTHASE-LIKE 2, found in Arabidopsis thaliana (Mouse-ear cress).